The chain runs to 239 residues: Purine nucleoside phosphorylase DeoD-type (239 aa).

His5 contacts a purine D-ribonucleoside. Residues Gly21, Arg25, Arg44, and 88–91 each bind phosphate; that span reads RVGS. A purine D-ribonucleoside contacts are provided by residues 180–182 and 204–205; these read EME and SD. Residue Asp205 is the Proton donor of the active site.

The protein belongs to the PNP/UDP phosphorylase family. Homohexamer; trimer of homodimers.

The catalysed reaction is a purine D-ribonucleoside + phosphate = a purine nucleobase + alpha-D-ribose 1-phosphate. The enzyme catalyses a purine 2'-deoxy-D-ribonucleoside + phosphate = a purine nucleobase + 2-deoxy-alpha-D-ribose 1-phosphate. Its function is as follows. Catalyzes the reversible phosphorolytic breakdown of the N-glycosidic bond in the beta-(deoxy)ribonucleoside molecules, with the formation of the corresponding free purine bases and pentose-1-phosphate. The sequence is that of Purine nucleoside phosphorylase DeoD-type from Klebsiella pneumoniae (strain 342).